A 120-amino-acid polypeptide reads, in one-letter code: Aspartate 1-decarboxylase (120 aa).

Serine 24 functions as the Schiff-base intermediate with substrate; via pyruvic acid in the catalytic mechanism. The residue at position 24 (serine 24) is a Pyruvic acid (Ser). Threonine 56 contacts substrate. Residue tyrosine 57 is the Proton donor of the active site. 70-72 serves as a coordination point for substrate; that stretch reads GAA.

Belongs to the PanD family. Heterooctamer of four alpha and four beta subunits. The cofactor is pyruvate. In terms of processing, is synthesized initially as an inactive proenzyme, which is activated by self-cleavage at a specific serine bond to produce a beta-subunit with a hydroxyl group at its C-terminus and an alpha-subunit with a pyruvoyl group at its N-terminus.

It localises to the cytoplasm. It catalyses the reaction L-aspartate + H(+) = beta-alanine + CO2. Its pathway is cofactor biosynthesis; (R)-pantothenate biosynthesis; beta-alanine from L-aspartate: step 1/1. Catalyzes the pyruvoyl-dependent decarboxylation of aspartate to produce beta-alanine. The polypeptide is Aspartate 1-decarboxylase (Pyrobaculum islandicum (strain DSM 4184 / JCM 9189 / GEO3)).